A 390-amino-acid polypeptide reads, in one-letter code: Neuromedin-B receptor (390 aa).

The Extracellular portion of the chain corresponds to 1 to 41 (MPPRSLSNLSFPTEANESELVPEVWEKDFLPDSDGTTAELV). N-linked (GlcNAc...) asparagine glycans are attached at residues asparagine 8 and asparagine 16. A helical membrane pass occupies residues 42 to 65 (IRCVIPSLYLIIISVGLLGNIMLV). Topologically, residues 66 to 79 (KIFLTNSAMRNVPN) are cytoplasmic. The chain crosses the membrane as a helical span at residues 80-99 (IFISNLAAGDLLLLLTCVPV). Topologically, residues 100–117 (DASRYFFDEWVFGKLGCK) are extracellular. Cysteines 116 and 198 form a disulfide. The helical transmembrane segment at 118–139 (LIPAIQLTSVGVSVFTLTALSA) threads the bilayer. The Cytoplasmic segment spans residues 140–156 (DRYRAIVNPMDMQTSGV). Residues 157–177 (LLWTSLKAVGIWVVSVLLAVP) traverse the membrane as a helical segment. Over 178–211 (EAVFSEVARIGSLDNSSFTACIPYPQTDELHPKI) the chain is Extracellular. Asparagine 192 carries an N-linked (GlcNAc...) asparagine glycan. The chain crosses the membrane as a helical span at residues 212-235 (HSVLIFLVYFLIPLVIISIYYYHI). Topologically, residues 236-266 (AKTLIKSAHNLPGEYNEHTKKQMETRKRLAK) are cytoplasmic. A helical membrane pass occupies residues 267–287 (IVLVFVGCFVFCWFPNHVLYL). Over 288–299 (YRSFNYKEIDPS) the chain is Extracellular. A helical transmembrane segment spans residues 300-327 (LGHMIVTLVARVLSFSNSCVNPFALYLL). Residues 328–390 (SESFRKHFNS…GHSTKQEIAL (63 aa)) lie on the Cytoplasmic side of the membrane. Residue cysteine 341 is the site of S-palmitoyl cysteine attachment. Serine 352 carries the post-translational modification Phosphoserine.

The protein belongs to the G-protein coupled receptor 1 family. As to expression, expressed in a subset of neurons of the pre-Botzinger complex. Within the pre-Botzinger complex, there is some overlap with neurons expressing Grpr with some cells expressing only Grpr or Nmbr while some cells express both. Expressed in dorsal root ganglion neurons and mast cells. Expressed in lung.

The protein resides in the cell membrane. In terms of biological role, receptor for neuromedin-B. Contributes to the maintenance of basal sigh rate through signaling in the pre-Botzinger complex, a cluster of several thousand neurons in the ventrolateral medulla responsible for inspiration during respiratory activity. Contributes to the induction of sneezing following exposure to chemical irritants or allergens which causes release of NMB by nasal sensory neurons and activation of NMBR-expressing neurons in the sneeze-evoking region of the brainstem. These in turn activate neurons of the caudal ventral respiratory group, giving rise to the sneezing response. Contributes to induction of acute itch, possibly through its activation on dorsal root ganglion neurons by the NMB peptide. Plays a role in the innate immune response to influenza A virus infection by enhancing interferon alpha expression and reducing expression of IL6. Plays a role in CSF1-induced proliferation of osteoclast precursors by contributing to the positive regulation of the expression of the CSF1 receptor CSF1R. This chain is Neuromedin-B receptor (Nmbr), found in Mus musculus (Mouse).